A 374-amino-acid chain; its full sequence is PqqA peptide cyclase (374 aa).

The Radical SAM core domain maps to 4–224 (IEPPMGLLAE…ERLKGVMVID (221 aa)). [4Fe-4S] cluster-binding residues include C18, C22, and C25.

This sequence belongs to the radical SAM superfamily. PqqE family. As to quaternary structure, interacts with PqqD. The interaction is necessary for activity of PqqE. Requires [4Fe-4S] cluster as cofactor.

It catalyses the reaction [PQQ precursor protein] + S-adenosyl-L-methionine = E-Y cross-linked-[PQQ precursor protein] + 5'-deoxyadenosine + L-methionine + H(+). The protein operates within cofactor biosynthesis; pyrroloquinoline quinone biosynthesis. Its function is as follows. Catalyzes the cross-linking of a glutamate residue and a tyrosine residue in the PqqA protein as part of the biosynthesis of pyrroloquinoline quinone (PQQ). In Granulibacter bethesdensis (strain ATCC BAA-1260 / CGDNIH1), this protein is PqqA peptide cyclase.